The primary structure comprises 84 residues: MANHKSSIKRIRKSQIRRLRNKYYAKTARNAVKNIRGTADKVQAGVLYKKVSKMLDKLAKKNVIHNNKANNLKSKLALYVNSLN.

The protein belongs to the bacterial ribosomal protein bS20 family.

In terms of biological role, binds directly to 16S ribosomal RNA. The protein is Small ribosomal subunit protein bS20 of Azobacteroides pseudotrichonymphae genomovar. CFP2.